Consider the following 614-residue polypeptide: Dihydroxy-acid dehydratase (614 aa).

Mg(2+) is bound at residue D81. C122 serves as a coordination point for [2Fe-2S] cluster. The Mg(2+) site is built by D123 and K124. The residue at position 124 (K124) is an N6-carboxylysine. C195 provides a ligand contact to [2Fe-2S] cluster. E491 contacts Mg(2+). The Proton acceptor role is filled by S517.

It belongs to the IlvD/Edd family. In terms of assembly, homodimer. The cofactor is [2Fe-2S] cluster. Mg(2+) serves as cofactor.

The catalysed reaction is (2R)-2,3-dihydroxy-3-methylbutanoate = 3-methyl-2-oxobutanoate + H2O. It carries out the reaction (2R,3R)-2,3-dihydroxy-3-methylpentanoate = (S)-3-methyl-2-oxopentanoate + H2O. Its pathway is amino-acid biosynthesis; L-isoleucine biosynthesis; L-isoleucine from 2-oxobutanoate: step 3/4. It participates in amino-acid biosynthesis; L-valine biosynthesis; L-valine from pyruvate: step 3/4. Its function is as follows. Functions in the biosynthesis of branched-chain amino acids. Catalyzes the dehydration of (2R,3R)-2,3-dihydroxy-3-methylpentanoate (2,3-dihydroxy-3-methylvalerate) into 2-oxo-3-methylpentanoate (2-oxo-3-methylvalerate) and of (2R)-2,3-dihydroxy-3-methylbutanoate (2,3-dihydroxyisovalerate) into 2-oxo-3-methylbutanoate (2-oxoisovalerate), the penultimate precursor to L-isoleucine and L-valine, respectively. This Actinobacillus succinogenes (strain ATCC 55618 / DSM 22257 / CCUG 43843 / 130Z) protein is Dihydroxy-acid dehydratase.